An 86-amino-acid chain; its full sequence is Large ribosomal subunit protein uL23 (86 aa).

It belongs to the universal ribosomal protein uL23 family. Part of the 50S ribosomal subunit. Contacts protein L29.

Binds to 23S rRNA. One of the proteins that surrounds the polypeptide exit tunnel on the outside of the ribosome. In Methanococcus maripaludis (strain C5 / ATCC BAA-1333), this protein is Large ribosomal subunit protein uL23.